We begin with the raw amino-acid sequence, 432 residues long: EF-hand calcium-binding domain-containing protein 3 (432 aa).

EF-hand domains follow at residues 45–80 and 81–116; these read AQLE…LGMN and LNAY…KKLF. Residues Asp94, Asp96, Asp98, Lys100, and Asp105 each contribute to the Ca(2+) site. Tyr273 is subject to Phosphotyrosine. The disordered stretch occupies residues 394–432; sequence NVNKTSPSNSGLSSPSDLSESDPETGRKRKRKSSRGFRQ. A compositionally biased stretch (low complexity) spans 399–411; sequence SPSNSGLSSPSDL. A compositionally biased stretch (basic residues) spans 420 to 432; it reads RKRKRKSSRGFRQ.

This Rattus norvegicus (Rat) protein is EF-hand calcium-binding domain-containing protein 3 (Efcab3).